A 2912-amino-acid chain; its full sequence is Fibrillin-2 (2912 aa).

The first 28 residues, 1-28, serve as a signal peptide directing secretion; sequence MGRRRRLCLQLYFLWLGCVVLWAQGTAG. Residues 27 to 52 form a disordered region; sequence AGQPQPPPPKPPRPQPPPQQVRSATA. Positions 29–77 are excised as a propeptide; that stretch reads QPQPPPPKPPRPQPPPQQVRSATAGSEGGFLAPEYREEGAAVASRVRRR. Residues 30-45 are compositionally biased toward pro residues; that stretch reads PQPPPPKPPRPQPPPQ. EGF-like domains are found at residues 111–142, 145–176, and 176–208; these read IVPI…STCG, SIQQ…TYCG, and GQPV…PQCE. 9 disulfide bridges follow: Cys115/Cys124, Cys119/Cys130, Cys132/Cys141, Cys149/Cys159, Cys153/Cys164, Cys166/Cys175, Cys180/Cys190, Cys184/Cys196, and Cys198/Cys207. Residues 149 to 359 are interaction with MFAP4; that stretch reads CSVRCMNGGT…VTSTDGSRCI (211 aa). One can recognise a TB 1 domain in the interval 214-266; that stretch reads GPCFTQVNNQMCQGQLTGIVCTKTLCCATIGRAWGHPCEMCPAQPQPCRRGFI. The 42-residue stretch at 276–317 folds into the EGF-like 4; calcium-binding domain; that stretch reads DVDECQAIPGICQGGNCINTVGSFECRCPAGHKQSETTQKCE. 6 disulfides stabilise this stretch: Cys280/Cys292, Cys287/Cys301, Cys303/Cys316, Cys322/Cys334, Cys329/Cys343, and Cys345/Cys358. Ser298 carries O-linked (Glc) serine glycosylation. The region spanning 318-359 is the EGF-like 5; calcium-binding domain; sequence DIDECSIIPGICETGECSNTVGSYFCVCPRGYVTSTDGSRCI. Ser340 carries an O-linked (Glc) serine glycan. A TB 2 domain is found at 364–417; the sequence is GMCFSGLVNGRCAQELPGRMTKMQCCCEPGRCWGIGTIPEACPVRGSEEYRRLC. N-linked (GlcNAc...) asparagine glycosylation occurs at Asn492. One can recognise an EGF-like 6 domain in the interval 494-534; the sequence is TIDICKHHANLCLNGRCIPTVSSYRCECNMGYKQDANGDCI. 15 disulfides stabilise this stretch: Cys498/Cys510, Cys505/Cys519, Cys521/Cys533, Cys539/Cys549, Cys544/Cys558, Cys560/Cys573, Cys579/Cys591, Cys586/Cys600, Cys602/Cys615, Cys621/Cys632, Cys627/Cys641, Cys643/Cys656, Cys662/Cys673, Cys668/Cys682, and Cys684/Cys697. Ser516 carries an O-linked (Glc) serine glycan. One can recognise an EGF-like 7; calcium-binding domain in the interval 535 to 574; the sequence is DVDECTSNPCTNGDCVNTPGSYYCKCHAGFQRTPTKQACI. An O-linked (Glc) serine glycan is attached at Ser555. The region spanning 575–616 is the EGF-like 8; calcium-binding domain; it reads DIDECIQNGVLCKNGRCVNTDGSFQCICNAGFELTTDGKNCV. Residue Ser597 is glycosylated (O-linked (Glc) serine). One can recognise an EGF-like 9; calcium-binding domain in the interval 617–657; sequence DHDECTTTNMCLNGMCINEDGSFKCICKPGFVLAPNGRYCT. Residue Ser638 is glycosylated (O-linked (Glc) serine). The EGF-like 10; calcium-binding domain occupies 658–698; it reads DVDECQTPGICMNGHCINSEGSFRCDCPPGLAVGMDGRVCV. O-linked (Glc) serine glycosylation is present at Ser679. The TB 3 domain occupies 704 to 756; that stretch reads STCYGGIKKGVCVRPFPGAVTKSECCCANPDYGFGEPCQPCPAKNSAEFHGLC. Positions 768 to 809 constitute an EGF-like 11; calcium-binding domain; sequence DINECALDPDICANGICENLRGSYRCNCNSGYEPDASGRNCI. Intrachain disulfides connect Cys772/Cys784, Cys779/Cys793, Cys795/Cys808, Cys814/Cys826, Cys821/Cys835, Cys837/Cys850, Cys856/Cys866, Cys861/Cys875, and Cys877/Cys890. The EGF-like 12; calcium-binding domain occupies 810–851; sequence DIDECLVNRLLCDNGLCRNTPGSYSCTCPPGYVFRTETETCE. The O-linked (Glc) serine glycan is linked to Ser832. The EGF-like 13; calcium-binding domain maps to 852–891; it reads DINECESNPCVNGACRNNLGSFNCECSPGSKLSSTGLICI. An O-linked (Glc) serine glycan is attached at Ser872. Residues 896-947 form the TB 4 domain; sequence GTCWLNIQDSRCEVNINGATLKSECCATLGAAWGSPCERCELDTACPRGLAR. An EGF-like 14; calcium-binding domain is found at 955-996; sequence DVNECEVFPGVCPNGRCVNSKGSFHCECPEGLTLDGTGRVCL. Disulfide bonds link Cys959/Cys971, Cys966/Cys980, and Cys982/Cys995. O-linked (Glc) serine glycosylation occurs at Ser977. Positions 1001–1052 constitute a TB 5 domain; the sequence is EQCYLKWDEDECIHPVPGKFRMDACCCAVGAAWGTECEECPKPGTKEYETLC. The EGF-like 15; calcium-binding domain maps to 1073–1114; that stretch reads DINECKAFPGMCTYGKCRNTIGSFKCRCNSGFALDMEERNCT. 36 disulfides stabilise this stretch: Cys1077–Cys1089, Cys1084–Cys1098, Cys1100–Cys1113, Cys1119–Cys1131, Cys1126–Cys1140, Cys1142–Cys1156, Cys1162–Cys1174, Cys1169–Cys1183, Cys1185–Cys1198, Cys1204–Cys1216, Cys1211–Cys1225, Cys1227–Cys1240, Cys1246–Cys1257, Cys1253–Cys1266, Cys1268–Cys1281, Cys1287–Cys1299, Cys1294–Cys1308, Cys1310–Cys1323, Cys1329–Cys1341, Cys1336–Cys1350, Cys1352–Cys1365, Cys1371–Cys1384, Cys1378–Cys1393, Cys1395–Cys1406, Cys1412–Cys1425, Cys1419–Cys1434, Cys1436–Cys1447, Cys1453–Cys1465, Cys1460–Cys1474, Cys1476–Cys1489, Cys1495–Cys1506, Cys1501–Cys1515, Cys1517–Cys1530, Cys1536–Cys1547, Cys1542–Cys1556, and Cys1558–Cys1571. O-linked (Glc) serine glycosylation is present at Ser1095. Residue Asn1112 is glycosylated (N-linked (GlcNAc...) asparagine). Residues 1115–1157 form the EGF-like 16; calcium-binding domain; that stretch reads DIDECRISPDLCGSGICVNTPGSFECECFEGYESGFMMMKNCM. Positions 1158–1199 constitute an EGF-like 17; calcium-binding domain; it reads DIDECERNPLLCRGGTCVNTEGSFQCDCPLGHELSPSREDCV. Ser1180 carries an O-linked (Glc) serine glycan. The 42-residue stretch at 1200-1241 folds into the EGF-like 18; calcium-binding domain; sequence DINECSLSDNLCRNGKCVNMIGTYQCSCNPGYQATPDRQGCT. Thr1222 carries O-linked (Glc) threonine glycosylation. Positions 1242–1282 constitute an EGF-like 19; calcium-binding domain; the sequence is DIDECMIMNGGCDTQCTNSEGSYECSCSEGYALMPDGRSCA. O-linked (Glc) serine glycosylation occurs at Ser1263. The region spanning 1283–1324 is the EGF-like 20; calcium-binding domain; sequence DIDECENNPDICDGGQCTNIPGEYRCLCYDGFMASMDMKTCI. The EGF-like 21; calcium-binding domain occupies 1325–1366; sequence DVNECDLNSNICMFGECENTKGSFICHCQLGYSVKKGTTGCT. The O-linked (Glc) serine glycan is linked to Ser1347. The EGF-like 22; calcium-binding domain maps to 1367–1407; the sequence is DVDECEIGAHNCDMHASCLNIPGSFKCSCREGWIGNGIKCI. Residue Ser1390 is glycosylated (O-linked (Glc) serine). An EGF-like 23; calcium-binding domain is found at 1408-1448; sequence DLDECSNGTHQCSINAQCVNTPGSYRCACSEGFTGDGFTCS. N-linked (GlcNAc...) asparagine glycosylation is present at Asn1414. In terms of domain architecture, EGF-like 24; calcium-binding spans 1449–1490; that stretch reads DVDECAENINLCENGQCLNVPGAYRCECEMGFTPASDSRSCQ. One can recognise an EGF-like 25; calcium-binding domain in the interval 1491–1531; that stretch reads DIDECSFQNICVFGTCNNLPGMFHCICDDGYELDRTGGNCT. N-linked (GlcNAc...) asparagine glycosylation occurs at Asn1529. The EGF-like 26; calcium-binding domain occupies 1532-1572; that stretch reads DIDECADPINCVNGLCVNTPGRYECNCPPDFQLNPTGVGCV. Residues 1577 to 1633 enclose the TB 6 domain; that stretch reads GNCYLKFGPRGDGSLSCNTEIGVGVSRSSCCCSLGKAWGNPCETCPPVNSTEYYTLC. N-linked (GlcNAc...) asparagine glycosylation occurs at Asn1625. The 42-residue stretch at 1650–1691 folds into the EGF-like 27; calcium-binding domain; that stretch reads DIDECQELPGLCQGGNCINTFGSFQCECPQGYYLSEDTRICE. Disulfide bonds link Cys1654-Cys1666, Cys1661-Cys1675, Cys1677-Cys1690, Cys1696-Cys1708, Cys1703-Cys1717, and Cys1719-Cys1732. An O-linked (Glc) serine glycan is attached at Ser1672. Positions 1692 to 1733 constitute an EGF-like 28; calcium-binding domain; it reads DIDECFAHPGVCGPGTCYNTLGNYTCICPPEYMQVNGGHNCM. Asn1714 carries N-linked (GlcNAc...) asparagine glycosylation. The segment at 1735 to 2171 is interaction with MFAP4; it reads MRKSFCYRSY…VPSLHDTRED (437 aa). A TB 7 domain is found at 1738–1791; sequence SFCYRSYNGTTCENELPFNVTKRMCCCTYNVGKAWNKPCEPCPTPGTADFKTIC. 2 N-linked (GlcNAc...) asparagine glycosylation sites follow: Asn1745 and Asn1756. Positions 1808–1849 constitute an EGF-like 29; calcium-binding domain; that stretch reads DIDECKEIPGICANGVCINQIGSFRCECPTGFSYNDLLLVCE. Disulfide bonds link Cys1812/Cys1824, Cys1819/Cys1833, Cys1835/Cys1848, Cys1854/Cys1867, Cys1861/Cys1876, Cys1878/Cys1890, Cys1896/Cys1908, Cys1903/Cys1917, Cys1919/Cys1932, Cys1938/Cys1948, Cys1943/Cys1957, Cys1959/Cys1971, Cys1977/Cys1990, Cys1985/Cys1999, Cys2001/Cys2014, Cys2020/Cys2032, Cys2027/Cys2041, Cys2043/Cys2054, Cys2060/Cys2072, Cys2067/Cys2081, and Cys2083/Cys2096. In terms of domain architecture, EGF-like 30; calcium-binding spans 1850–1891; that stretch reads DIDECSNGDNLCQRNADCINSPGSYRCECAAGFKLSPNGACV. Residue Ser1873 is glycosylated (O-linked (Glc) serine). Residues 1892-1933 form the EGF-like 31; calcium-binding domain; the sequence is DRNECLEIPNVCSHGLCVDLQGSYQCICHNGFKASQDQTMCM. An EGF-like 32; calcium-binding domain is found at 1934–1972; it reads DVDECERHPCGNGTCKNTVGSYNCLCYPGFELTHNNDCL. Asn1945 carries N-linked (GlcNAc...) asparagine glycosylation. Ser1954 is a glycosylation site (O-linked (Glc) serine). In terms of domain architecture, EGF-like 33; calcium-binding spans 1973-2015; it reads DIDECSSFFGQVCRNGRCFNEIGSFKCLCNEGYELTPDGKNCI. Residue Ser1996 is glycosylated (O-linked (Glc) serine). Residues 2016-2055 form the EGF-like 34; calcium-binding domain; it reads DTNECVALPGSCSPGTCQNLEGSFRCICPPGYEVKSENCI. An EGF-like 35; calcium-binding domain is found at 2056–2097; it reads DINECDEDPNICLFGSCTNTPGGFQCLCPPGFVLSDNGRRCF. The 54-residue stretch at 2102–2155 folds into the TB 8 domain; it reads SFCFTNFENGKCSVPKAFNTTKAKCCCSKMPGEGWGDPCELCPKDDEVAFQDLC. N-linked (GlcNAc...) asparagine glycosylation is present at Asn2120. Residues 2171 to 2212 form the EGF-like 36; calcium-binding domain; sequence DVNECLESPGICSNGQCINTDGSFRCECPMGYNLDYTGVRCV. 15 cysteine pairs are disulfide-bonded: Cys2175-Cys2187, Cys2182-Cys2196, Cys2198-Cys2211, Cys2217-Cys2228, Cys2223-Cys2237, Cys2239-Cys2251, Cys2257-Cys2268, Cys2264-Cys2277, Cys2279-Cys2292, Cys2298-Cys2312, Cys2305-Cys2321, Cys2323-Cys2336, Cys2342-Cys2354, Cys2349-Cys2363, and Cys2365-Cys2378. Ser2193 is a glycosylation site (O-linked (Glc) serine). One can recognise an EGF-like 37; calcium-binding domain in the interval 2213 to 2252; that stretch reads DTDECSIGNPCGNGTCTNVIGSFECNCNEGFEPGPMMNCE. N-linked (GlcNAc...) asparagine glycosylation is present at Asn2225. Positions 2253 to 2293 constitute an EGF-like 38; calcium-binding domain; sequence DINECAQNPLLCAFRCMNTFGSYECTCPIGYALREDQKMCK. Residue Ser2274 is glycosylated (O-linked (Glc) serine). The 44-residue stretch at 2294–2337 folds into the EGF-like 39; calcium-binding domain; that stretch reads DLDECAEGLHDCESRGMMCKNLIGTFMCICPPGMARRPDGEGCV. The region spanning 2338 to 2379 is the EGF-like 40; calcium-binding domain; sequence DENECRTKPGICENGRCVNIIGSYRCECNEGFQSSSSGTECL. The O-linked (Glc) serine glycan is linked to Ser2360. Positions 2384 to 2437 constitute a TB 9 domain; the sequence is GLCFAEVLQTICQMASSSRNLVTKSECCCDGGRGWGHQCELCPLPGTAQYKKIC. Residues 2449–2490 form the EGF-like 41; calcium-binding domain; the sequence is DIDECKVMPNLCTNGQCINTMGSFRCFCKVGYTTDISGTSCI. 21 disulfide bridges follow: Cys2453–Cys2465, Cys2460–Cys2474, Cys2476–Cys2489, Cys2495–Cys2506, Cys2502–Cys2515, Cys2517–Cys2530, Cys2536–Cys2547, Cys2543–Cys2556, Cys2558–Cys2569, Cys2575–Cys2588, Cys2582–Cys2597, Cys2599–Cys2612, Cys2618–Cys2628, Cys2624–Cys2637, Cys2639–Cys2652, Cys2658–Cys2669, Cys2664–Cys2678, Cys2680–Cys2693, Cys2699–Cys2710, Cys2706–Cys2719, and Cys2721–Cys2733. An O-linked (Glc) serine glycan is attached at Ser2471. One can recognise an EGF-like 42; calcium-binding domain in the interval 2491–2531; sequence DLDECSQSPKPCNYICKNTEGSYQCSCPRGYVLQEDGKTCK. Ser2512 carries an O-linked (Glc) serine glycan. The EGF-like 43; calcium-binding domain occupies 2532-2570; sequence DLDECQTKQHNCQFLCVNTLGGFTCKCPPGFTQHHTACI. Residues 2571-2613 form the EGF-like 44; calcium-binding domain; the sequence is DNNECGSQPSLCGAKGICQNTPGSFSCECQRGFSLDATGLNCE. A glycan (O-linked (Glc) serine) is linked at Ser2594. Residues 2614 to 2653 form the EGF-like 45; calcium-binding domain; the sequence is DVDECDGNHRCQHGCQNILGGYRCGCPQGYIQHYQWNQCV. Residues 2654–2694 enclose the EGF-like 46; calcium-binding domain; that stretch reads DENECSNPNACGSASCYNTLGSYKCACPSGFSFDQFSSACH. The O-linked (Glc) serine glycan is linked to Ser2675. In terms of domain architecture, EGF-like 47; calcium-binding spans 2695–2734; the sequence is DVNECSSSKNPCNYGCSNTEGGYLCGCPPGYYRVGQGHCV. N-linked (GlcNAc...) asparagine glycosylation occurs at Asn2808.

It belongs to the fibrillin family. In terms of assembly, interacts with BMP2, BMP4, BMP7, BMP10 and GDF5. Interacts with MFAP2 and MFAP5. Interacts with ADAMTSL5. Interacts with MFAP4. In terms of processing, N-glycosylated. Post-translationally, O-glycosylated on serine residues by POGLUT2 and POGLUT3. As to expression, almost exclusively expressed in placenta. Expressed at much lower level in other tissues. Expressed in fetal eye (18 weeks)in the retinal pigment epithelium (RPE), the choroid, Bruch's membrane and in the sclera. Not expressed in the neural retina. Present at high level in cytotrophoblasts as compared with syncytiotrophoblasts at 8-9 weeks of pregnancy (at protein level). Levels in the serum increase during pregnancy (at protein level).

Its subcellular location is the secreted. The protein localises to the extracellular space. It localises to the extracellular matrix. In terms of biological role, fibrillins are structural components of 10-12 nm extracellular calcium-binding microfibrils, which occur either in association with elastin or in elastin-free bundles. Fibrillin-2-containing microfibrils regulate the early process of elastic fiber assembly. Regulates osteoblast maturation by controlling TGF-beta bioavailability and calibrating TGF-beta and BMP levels, respectively. Hormone secreted by trophoblasts that promotes trophoblast invasiveness. Has glucogenic activity: is able to increase plasma glucose levels. The chain is Fibrillin-2 from Homo sapiens (Human).